A 318-amino-acid chain; its full sequence is Ankyrin repeat and SOCS box protein 7 (318 aa).

7 ANK repeats span residues 13 to 42 (QEES…SPNG), 46 to 75 (NGWT…DPTV), 80 to 109 (GGFT…RSDI), 116 to 145 (DGWT…EVDP), 149 to 178 (KGTT…NIDI), 180 to 208 (NGFL…DTNL), and 213 to 242 (DGQT…DTNT). In terms of domain architecture, SOCS box spans 265–318 (LDFLQEVTRQPRNLQDLCRIKIRQCIGLQNLKLLDELPIAKVMKDYLKHKSDDI).

This sequence belongs to the ankyrin SOCS box (ASB) family. Interacts with CUL5. Interacts with RNF7. Interacts with PSRC1.

It participates in protein modification; protein ubiquitination. In terms of biological role, probable substrate-recognition component of a SCF-like ECS (Elongin-Cullin-SOCS-box protein) E3 ubiquitin-protein ligase complex which mediates the ubiquitination and subsequent proteasomal degradation of target proteins. Plays a role in spindle dynamics and genome integrity by targeting the mitotic progression protein PSRC1 for proteasomal degradation in a cell cycle-dependent manner. Also participates in meiosis by mediating the proper attachment between kinetochores and microtubules. The sequence is that of Ankyrin repeat and SOCS box protein 7 (ASB7) from Pongo abelii (Sumatran orangutan).